A 186-amino-acid polypeptide reads, in one-letter code: Ribosome-recycling factor (186 aa).

The protein belongs to the RRF family.

The protein resides in the cytoplasm. Functionally, responsible for the release of ribosomes from messenger RNA at the termination of protein biosynthesis. May increase the efficiency of translation by recycling ribosomes from one round of translation to another. This is Ribosome-recycling factor from Herminiimonas arsenicoxydans.